A 441-amino-acid chain; its full sequence is Xylose isomerase (441 aa).

Residues H105 and D108 contribute to the active site. Mg(2+) is bound by residues E236, E272, H275, D300, D311, D313, and D343.

Belongs to the xylose isomerase family. Homotetramer. It depends on Mg(2+) as a cofactor.

The protein localises to the cytoplasm. The catalysed reaction is alpha-D-xylose = alpha-D-xylulofuranose. The sequence is that of Xylose isomerase from Mesorhizobium japonicum (strain LMG 29417 / CECT 9101 / MAFF 303099) (Mesorhizobium loti (strain MAFF 303099)).